The primary structure comprises 200 residues: Ras-related protein Rab5 (200 aa).

GTP is bound by residues 17–25 (GDMGAGKSS), 36–42 (LEFQEST), 65–69 (DTAGQ), 123–126 (NKAD), and 153–155 (SAK). The Effector region motif lies at 39–47 (QESTIGAAF). S-geranylgeranyl cysteine attachment occurs at residues Cys-198 and Cys-199.

This sequence belongs to the small GTPase superfamily. Rab family. Virtually not expressed in leaves, higher in stems and roots, and highest in flowers.

It localises to the cell membrane. Protein transport. Probably involved in vesicular traffic. The sequence is that of Ras-related protein Rab5 (RAB5) from Nicotiana tabacum (Common tobacco).